The chain runs to 103 residues: G0/G1 switch protein 2 (103 aa).

A disordered region spans residues 80 to 103 (LQEKGKQQDTVLGGRALSNRQHAS).

Directly interacts with BCL2; this interaction prevents the formation of the anti-apoptotic BAX-BCL2 complex. Widely expressed with highest levels in peripheral blood, skeletal muscle and heart, followed by kidney and liver.

Its subcellular location is the mitochondrion. In terms of biological role, promotes apoptosis by binding to BCL2, hence preventing the formation of protective BCL2-BAX heterodimers. This chain is G0/G1 switch protein 2 (G0S2), found in Homo sapiens (Human).